Consider the following 474-residue polypeptide: DNA-binding protein (474 aa).

Positions 1–34 (MAGRQREHPTVTPYLQETSPERPPPLPPKKKLRK) are disordered. The residue at position 142 (Y142) is a Phosphotyrosine; by host. Residues C231 and H233 each contribute to the Zn(2+) site. Residues 244 to 278 (VEVDVGSENGQRALKEQPSKTKVVQNRWGRSVVQI) are flexible loop. C286, C302, C343, C345, C397, and C413 together coordinate Zn(2+). The segment at 460 to 474 (VALPTGHGDAEVEPF) is C-terminal arm, DBP binding.

It belongs to the adenoviridae E2A DNA-binding protein family. Homomultimerizes on viral ssDNA bound to pTP. Forms a initiation complex with viral polymerase, pTP and hosts NFIA and POU2F1/OCT1. Interacts with host SRCAP.

The protein localises to the host nucleus. In terms of biological role, plays a role in the elongation phase of viral strand displacement replication by unwinding the template in an ATP-independent fashion, employing its capacity to form multimers. Also enhances the rate of initiation. Released from template upon second strand synthesis. Assembles in complex with viral pTP, viral pol, host NFIA and host POU2F1/OCT1 on viral origin of replication. Covers the whole ssDNA genome during synthesis. The complementary strand synthesis induces its relese from DNA template. May inhibit cellular transcription mediated by the interaction between host SRCAP and CBP. This is DNA-binding protein from Homo sapiens (Human).